The sequence spans 615 residues: Sodium-coupled neutral amino acid transporter 9 homolog (615 aa).

Over 1-165 (MPPFFAEFTE…LKDVSGKQGS (165 aa)) the chain is Cytoplasmic. Residues 41 to 65 (VDDNDTDPLLDDEPPRRLPPAGGVP) are disordered. Over residues 42–52 (DDNDTDPLLDD) the composition is skewed to acidic residues. A helical membrane pass occupies residues 166 to 186 (IVTIFSIWNTMMGTSLLAMPW). Residues 175 to 180 (TMMGTS) form an important for arginine binding and amino acid transport region. At 187-192 (ALQQAG) the chain is on the lumenal side. The chain crosses the membrane as a helical span at residues 193 to 213 (LVLGIIIMLSMAAICFYTAYI). The Cytoplasmic portion of the chain corresponds to 214–246 (VIESPKRLQDLSVDPLLAEFSDVCKSLFGRIGE). Residues 247-273 (YCAVVFSVCVLIGGVIVYWVLMSNFLY) traverse the membrane as a helical segment. The Lumenal segment spans residues 274 to 341 (YTGAVVYESM…TGDDSWSFDK (68 aa)). N-linked (GlcNAc...) asparagine glycosylation is found at N286 and N295. C304 and C478 form a disulfide bridge. The helical transmembrane segment at 342-358 (FWTLRGTVPIYLAFALF) threads the bilayer. The Cytoplasmic portion of the chain corresponds to 359–367 (PLMNFKSPT). A helical membrane pass occupies residues 368–392 (FFTKFNVLGTISVMYLLMFVFSKLL). The Lumenal segment spans residues 393-413 (ECGVNMDFSNPKSIHYVQLAN). A helical membrane pass occupies residues 414–434 (MHFPALSGTLTLSYFIHNAVL). Topologically, residues 435–451 (TILRNQKHPENNARDLS) are cytoplasmic. The chain crosses the membrane as a helical span at residues 452-472 (IGYCLVAFCYVFIGFTFFAAF). Over 473-491 (PVQRSCISDNFLNNFGAGD) the chain is Lumenal. The helical transmembrane segment at 492-512 (VLSSTARLFLLFQMITVLPLL) threads the bilayer. The Cytoplasmic segment spans residues 513-533 (MFLVRSQLFYAIFGQTWPGAI). A helical membrane pass occupies residues 534–554 (RVIILNVLLIAVAVGFATFYP). The Lumenal portion of the chain corresponds to 555–561 (NVGSILR). A helical membrane pass occupies residues 562-582 (YVGSISGLVYVFALPAMVYIK). Over 583-594 (QSEAAGTLTPMK) the chain is Cytoplasmic. Residues 595-615 (KYAHYGIIVIGVANLIAQFVI) traverse the membrane as a helical segment.

Belongs to the amino acid/polyamine transporter 2 family. SLC38A9 subfamily.

The protein resides in the lysosome membrane. The protein localises to the late endosome membrane. Amino acid transport is sodium-dependent. Transport of leucine, tyrosine and phenylalanine is increased by arginine binding. Functionally, lysosomal amino acid transporter involved in the activation of mTORC1 in response to amino acid levels. Probably acts as an amino acid sensor of the Rag GTPases and Ragulator complexes, 2 complexes involved in amino acid sensing and activation of mTORC1, a signaling complex promoting cell growth in response to growth factors, energy levels, and amino acids. This is Sodium-coupled neutral amino acid transporter 9 homolog from Caenorhabditis elegans.